A 377-amino-acid chain; its full sequence is uncharacterized protein (377 aa).

Helical transmembrane passes span 4–24 (LLTP…LLGT), 41–61 (ASFG…FPIT), 85–105 (IAAL…FLFG), 134–154 (FHAM…IATV), 159–179 (VYVH…PFLL), 192–212 (GAVG…IALA), 278–298 (VFGI…AGFV), 301–321 (GVGY…DLVV), 327–347 (IASV…AIGL), and 356–376 (LCFF…PVLK).

This sequence to R.meliloti MosC.

It localises to the cell membrane. Its function is as follows. Could be involved in a transport system. This is an uncharacterized protein from Sinorhizobium fredii (strain NBRC 101917 / NGR234).